A 546-amino-acid polypeptide reads, in one-letter code: MTVTVEPSITTGPIAGSSKAYREVAGPDGVTLRVPLRRVHLSTGADFDLYDTSGPYTDPNAVIDLAVGLPARPGLVRDRGTQLQRARAGEITAEMAFIAAREGMSAELVRDEVALGRAVIPANHNHPESEPMVIGKAFAVKVNANIGNSAVTSSIAEEVDKMVWATRWGADTIMDLSTGKNIHETREWILRNSPVPVGTVPIYQALEKVKGDPTELTWELYRDTVIEQCEQGVDYMTVHAGVLLRYVPLTAKRVTGIVSRGGSIMAAWCLAHHRESFLYTNFEELCDILARYDVTFSLGDGLRPGSIADANDAAQFAELRTLGELTKIAKAHGVQVMIEGPGHVPMHKIVENVRLEEELCEEAPFYTLGPLATDIAPAYDHITSAIGAAIIAQAGTAMLCYVTPKEHLGLPDRKDVKDGVIAYKIAAHAGDLAKGHPHAQERDNALSQARFEFRWNDQFALSLDPDTAREYHDETLPAEPAKTAHFCSMCGPKFCSMRITRDVRDYAAKHGLDSEEAIEAALEAGMAEKSAEFADHGNRVYLPITQ.

Residues asparagine 145, methionine 174, tyrosine 203, histidine 239, 259–261 (SRG), 300–303 (DGLR), and glutamate 339 contribute to the substrate site. Residue histidine 343 coordinates Zn(2+). Residue tyrosine 366 participates in substrate binding. Position 407 (histidine 407) interacts with Zn(2+). The [4Fe-4S] cluster site is built by cysteine 487, cysteine 490, and cysteine 495.

It belongs to the ThiC family. [4Fe-4S] cluster serves as cofactor.

The enzyme catalyses 5-amino-1-(5-phospho-beta-D-ribosyl)imidazole + S-adenosyl-L-methionine = 4-amino-2-methyl-5-(phosphooxymethyl)pyrimidine + CO + 5'-deoxyadenosine + formate + L-methionine + 3 H(+). The protein operates within cofactor biosynthesis; thiamine diphosphate biosynthesis. Its function is as follows. Catalyzes the synthesis of the hydroxymethylpyrimidine phosphate (HMP-P) moiety of thiamine from aminoimidazole ribotide (AIR) in a radical S-adenosyl-L-methionine (SAM)-dependent reaction. This is Phosphomethylpyrimidine synthase from Mycobacterium ulcerans (strain Agy99).